The sequence spans 175 residues: Adenine phosphoribosyltransferase (175 aa).

Belongs to the purine/pyrimidine phosphoribosyltransferase family. Homodimer.

It localises to the cytoplasm. The enzyme catalyses AMP + diphosphate = 5-phospho-alpha-D-ribose 1-diphosphate + adenine. The protein operates within purine metabolism; AMP biosynthesis via salvage pathway; AMP from adenine: step 1/1. Its function is as follows. Catalyzes a salvage reaction resulting in the formation of AMP, that is energically less costly than de novo synthesis. The protein is Adenine phosphoribosyltransferase of Maricaulis maris (strain MCS10) (Caulobacter maris).